The primary structure comprises 116 residues: ATP synthase lipid-binding protein, mitochondrial (116 aa).

The N-terminal 24 residues, 1 to 24, are a transit peptide targeting the mitochondrion; it reads MYCQRLALPLTRSLLASRAPLALR. A helical membrane pass occupies residues 57-77; that stretch reads VGVAGSGAGIGNVFGALVIGY. At lysine 84 the chain carries N6,N6,N6-trimethyllysine. Residues 92-112 form a helical membrane-spanning segment; the sequence is ILGFALSEAMGLFCLTMGFMI.

It belongs to the ATPase C chain family. F-type ATPases have 2 components, CF(1) - the catalytic core - and CF(0) - the membrane proton channel. CF(1) has five subunits: alpha(3), beta(3), gamma(1), delta(1), epsilon(1). CF(0) has three main subunits: a, b and c. Post-translationally, trimethylated by ATPSCKMT at Lys-84. Methylation may be required for proper incorporation of the C subunit into the ATP synthase complex and mitochondrial respiration.

The protein resides in the mitochondrion membrane. Functionally, mitochondrial membrane ATP synthase (F(1)F(0) ATP synthase or Complex V) produces ATP from ADP in the presence of a proton gradient across the membrane which is generated by electron transport complexes of the respiratory chain. F-type ATPases consist of two structural domains, F(1) - containing the extramembraneous catalytic core and F(0) - containing the membrane proton channel, linked together by a central stalk and a peripheral stalk. During catalysis, ATP synthesis in the catalytic domain of F(1) is coupled via a rotary mechanism of the central stalk subunits to proton translocation. Part of the complex F(0) domain. A homomeric c-ring of probably 10 subunits is part of the complex rotary element. The chain is ATP synthase lipid-binding protein, mitochondrial from Caenorhabditis briggsae.